A 536-amino-acid chain; its full sequence is MQSYTNRICAVCGDTPAKIHYGVLACFGCKGFFRRAVKDGRNKYVCRFEKNCEVTKFERNACRYCRFRKCLLVGMNPDYVRPDREKSKKGKTVLSKKKSVSRSLSYRLADPSDWTSFLSPSSRKQLSEIGKLAETCSTSTNFDGIGNFSLKSLIADRSLARKTGDSEAMDCSNSPRQLNEQFLGIERIVQCVDYIDRFLVMLEEEHCRKFSVEDKSALISDTMIHLLLFESTSRFVAKGAPGLEDLKLSLAQLPICTTHLTQKIADVFETYLRKPPSIIEYSVLKAYIVLSAESTVLSNSLNESLSLARENLSELLFKVIKHSRNKTSISAANSLSTILHFVYESRNLASRIRQSQQPFFVRDSDPKIPFHKILTDIINPEVSDLLLTTANCRKLSTQMGSSLSSVPPVPPPSDTVPLFHFSPPSLSPCQISAPPPPQQQYTDYSQMPSTSSYPANSSPFQSPYRPNSLSSFPKIPLEMTKSIEEFLRPNGMTTDEMNKPLEKNWADGFRLTPVFNKDIVSQFFPELSNINQHHPF.

Residues 6–82 constitute a DNA-binding region (nuclear receptor); that stretch reads NRICAVCGDT…VGMNPDYVRP (77 aa). NR C4-type zinc fingers lie at residues 9 to 29 and 46 to 70; these read CAVC…CFGC and CRFE…FRKC. The NR LBD domain maps to 155–378; sequence ADRSLARKTG…PFHKILTDII (224 aa). Residues 427–465 form a disordered region; it reads SPCQISAPPPPQQQYTDYSQMPSTSSYPANSSPFQSPYR. Residues 439 to 465 are compositionally biased toward polar residues; the sequence is QQYTDYSQMPSTSSYPANSSPFQSPYR.

This sequence belongs to the nuclear hormone receptor family.

The protein localises to the nucleus. In terms of biological role, orphan nuclear receptor. This is Nuclear hormone receptor family member nhr-7 (nhr-7) from Caenorhabditis elegans.